The following is a 1360-amino-acid chain: Spike glycoprotein (1360 aa).

The signal sequence occupies residues 1-13 (MLFVFLTLLPSCL). Residues 14–1301 (GYIGDFRCIN…GTYEMYVKWP (1288 aa)) lie on the Extracellular side of the membrane. In terms of domain architecture, BetaCoV S1-NTD spans 15-296 (YIGDFRCINL…SYTSEIKCKT (282 aa)). 5 disulfides stabilise this stretch: Cys-21/Cys-158, Cys-153/Cys-187, Cys-165/Cys-246, Cys-284/Cys-294, and Cys-329/Cys-354. 2 N-linked (GlcNAc...) asparagine; by host glycosylation sites follow: Asn-60 and Asn-134. Asn-192 is a glycosylation site (N-linked (GlcNAc...) asparagine; by host). One can recognise a BetaCoV S1-CTD domain in the interval 327-605 (PDCKIEEWLA…GINSGTTCST (279 aa)). Asn-357 carries N-linked (GlcNAc...) asparagine; by host glycosylation. Disulfide bonds link Cys-372-Cys-425 and Cys-384-Cys-603. Residues Asn-435, Asn-566, Asn-664, Asn-704, Asn-727, Asn-747, Asn-776, and Asn-793 are each glycosylated (N-linked (GlcNAc...) asparagine; by host). Fusion peptide regions lie at residues 906–927 (SAIE…VESY) and 925–945 (ESYN…VQSF). Residue Asn-929 is glycosylated (N-linked (GlcNAc...) asparagine; by host). The cysteines at positions 930 and 941 are disulfide-linked. The interval 1006 to 1056 (QKMIASSFNNAIGAIQEGFDATNSALAKIQSVVNANAEALNNLLNQLSNRF) is heptad repeat 1. Positions 1035 to 1079 (QSVVNANAEALNNLLNQLSNRFGAISASLQEILSRLDALEAQAQI) form a coiled coil. N-linked (GlcNAc...) asparagine; by host glycans are attached at residues Asn-1216, Asn-1226, Asn-1245, Asn-1261, and Asn-1282. Residues 1250 to 1290 (VPDLSFDIGKLNVTFLDLSYEMNRIQDAIKNLNESYINLKE) form a heptad repeat 2 region. A coiled-coil region spans residues 1263–1291 (TFLDLSYEMNRIQDAIKNLNESYINLKEI). Residues 1302–1322 (WYVWLLIGLAGVAVCVLLFFI) traverse the membrane as a helical segment. At 1323 to 1360 (CCCTGCGSCCFKKCGNCCDEYGGRQAGIVIHNISSHED) the chain is on the cytoplasmic side. Positions 1356–1360 (SSHED) match the KxHxx motif.

This sequence belongs to the betacoronaviruses spike protein family. Homotrimer; each monomer consists of a S1 and a S2 subunit. The resulting peplomers protrude from the virus surface as spikes. Post-translationally, specific enzymatic cleavages in vivo yield mature proteins. The precursor is processed into S1 and S2 by host cell furin or another cellular protease to yield the mature S1 and S2 proteins. Additionally, a second cleavage leads to the release of a fusion peptide after viral attachment to host cell receptor. In terms of processing, the cytoplasmic Cys-rich domain is palmitoylated. Spike glycoprotein is digested within host endosomes.

The protein localises to the virion membrane. It localises to the host endoplasmic reticulum-Golgi intermediate compartment membrane. The protein resides in the host cell membrane. Functionally, attaches the virion to the cell membrane by interacting with host receptor, initiating the infection. In terms of biological role, mediates fusion of the virion and cellular membranes by acting as a class I viral fusion protein. Under the current model, the protein has at least three conformational states: pre-fusion native state, pre-hairpin intermediate state, and post-fusion hairpin state. During viral and target cell membrane fusion, the coiled coil regions (heptad repeats) assume a trimer-of-hairpins structure, positioning the fusion peptide in close proximity to the C-terminal region of the ectodomain. The formation of this structure appears to drive apposition and subsequent fusion of viral and target cell membranes. Acts as a viral fusion peptide which is unmasked following S2 cleavage occurring upon virus endocytosis. The polypeptide is Spike glycoprotein (Rat coronavirus (strain 681) (RCV-SDAV)).